We begin with the raw amino-acid sequence, 315 residues long: 4-hydroxy-3-methylbut-2-enyl diphosphate reductase (315 aa).

Cys-12 contributes to the [4Fe-4S] cluster binding site. (2E)-4-hydroxy-3-methylbut-2-enyl diphosphate contacts are provided by His-40 and His-74. Dimethylallyl diphosphate contacts are provided by His-40 and His-74. Residues His-40 and His-74 each coordinate isopentenyl diphosphate. Position 96 (Cys-96) interacts with [4Fe-4S] cluster. Position 124 (His-124) interacts with (2E)-4-hydroxy-3-methylbut-2-enyl diphosphate. His-124 contacts dimethylallyl diphosphate. His-124 provides a ligand contact to isopentenyl diphosphate. Residue Glu-126 is the Proton donor of the active site. Thr-167 serves as a coordination point for (2E)-4-hydroxy-3-methylbut-2-enyl diphosphate. [4Fe-4S] cluster is bound at residue Cys-213. The (2E)-4-hydroxy-3-methylbut-2-enyl diphosphate site is built by Ser-241, Ser-242, Asn-243, and Ser-290. Residues Ser-241, Ser-242, Asn-243, and Ser-290 each contribute to the dimethylallyl diphosphate site. Isopentenyl diphosphate contacts are provided by Ser-241, Ser-242, Asn-243, and Ser-290.

It belongs to the IspH family. [4Fe-4S] cluster serves as cofactor.

The catalysed reaction is isopentenyl diphosphate + 2 oxidized [2Fe-2S]-[ferredoxin] + H2O = (2E)-4-hydroxy-3-methylbut-2-enyl diphosphate + 2 reduced [2Fe-2S]-[ferredoxin] + 2 H(+). It carries out the reaction dimethylallyl diphosphate + 2 oxidized [2Fe-2S]-[ferredoxin] + H2O = (2E)-4-hydroxy-3-methylbut-2-enyl diphosphate + 2 reduced [2Fe-2S]-[ferredoxin] + 2 H(+). It participates in isoprenoid biosynthesis; dimethylallyl diphosphate biosynthesis; dimethylallyl diphosphate from (2E)-4-hydroxy-3-methylbutenyl diphosphate: step 1/1. It functions in the pathway isoprenoid biosynthesis; isopentenyl diphosphate biosynthesis via DXP pathway; isopentenyl diphosphate from 1-deoxy-D-xylulose 5-phosphate: step 6/6. Its function is as follows. Catalyzes the conversion of 1-hydroxy-2-methyl-2-(E)-butenyl 4-diphosphate (HMBPP) into a mixture of isopentenyl diphosphate (IPP) and dimethylallyl diphosphate (DMAPP). Acts in the terminal step of the DOXP/MEP pathway for isoprenoid precursor biosynthesis. This is 4-hydroxy-3-methylbut-2-enyl diphosphate reductase from Chloroherpeton thalassium (strain ATCC 35110 / GB-78).